The chain runs to 760 residues: Probable 3',5'-cyclic phosphodiesterase pde-6 (760 aa).

Disordered regions lie at residues Met1–Ala47 and Lys410–Arg429. The span at Pro33–Ala47 shows a compositional bias: low complexity. Residues Ser412–Arg429 show a composition bias toward basic and acidic residues. Residues Glu426 to Trp750 enclose the PDEase domain. His502 serves as the catalytic Proton donor. 4 residues coordinate a divalent metal cation: His506, His542, Asp543, and Asp656.

It belongs to the cyclic nucleotide phosphodiesterase family. The cofactor is a divalent metal cation.

The catalysed reaction is a nucleoside 3',5'-cyclic phosphate + H2O = a nucleoside 5'-phosphate + H(+). The polypeptide is Probable 3',5'-cyclic phosphodiesterase pde-6 (pde-6) (Caenorhabditis elegans).